A 391-amino-acid polypeptide reads, in one-letter code: Toluene efflux pump periplasmic linker protein TtgG (391 aa).

The first 32 residues, 1–32, serve as a signal peptide directing secretion; that stretch reads MRAERWSQTVRQIRSPRALRVIPLTALMLISG. Cys-33 carries the N-palmitoyl cysteine lipid modification. Cys-33 is lipidated: S-diacylglycerol cysteine. The stretch at 107 to 136 forms a coiled coil; it reads RTYEAQLRRAEANRTSAQNLARRYETLLKT.

The protein belongs to the membrane fusion protein (MFP) (TC 8.A.1) family.

It is found in the cell inner membrane. In terms of biological role, the periplasmic linker component of an organic solvent efflux pump. Involved in export of a number of organic solvents, including toluene and styrene. This is the most important solvent efflux pump in this strain, although it can export AMP and some antibiotics. In Pseudomonas putida (strain DOT-T1E), this protein is Toluene efflux pump periplasmic linker protein TtgG (ttgG).